A 100-amino-acid polypeptide reads, in one-letter code: MGFNNLVSLAALIEKVFPIRYTPAGISVLDIILKHESWQKENGQQCFVQLEIPARILGRQAEEWQYRQGVYVHVEGFLAQKSRRSLMPMLRIQNIKEYKG.

The region spanning 1–99 (MGFNNLVSLA…LRIQNIKEYK (99 aa)) is the SSB domain.

This sequence belongs to the PriB family. In terms of assembly, homodimer. Interacts with PriA and DnaT. Component of the replication restart primosome. Primosome assembly occurs via a 'hand-off' mechanism. PriA binds to replication forks, subsequently PriB then DnaT bind; DnaT then displaces ssDNA to generate the helicase loading substrate.

Functionally, involved in the restart of stalled replication forks, which reloads the replicative helicase on sites other than the origin of replication; the PriA-PriB pathway is the major replication restart pathway. During primosome assembly it facilitates complex formation between PriA and DnaT on DNA; stabilizes PriA on DNA. Stimulates the DNA unwinding activity of PriA helicase. This Neisseria meningitidis serogroup C (strain 053442) protein is Replication restart protein PriB.